Reading from the N-terminus, the 30-residue chain is Cycloviolacin-H3 (30 aa).

Positions 1 to 30 (GLPVCGETCFGGTCNTPGCICDPWPVCTRN) form a cross-link, cyclopeptide (Gly-Asn). 3 disulfide bridges follow: Cys-5–Cys-19, Cys-9–Cys-21, and Cys-14–Cys-27.

This is a cyclic peptide.

Its function is as follows. Probably participates in a plant defense mechanism. The sequence is that of Cycloviolacin-H3 from Viola hederacea (Australian violet).